The following is a 41-amino-acid chain: Protein UL21 homolog (41 aa).

It belongs to the herpesviridae UL21 family.

The sequence is that of Protein UL21 homolog from Equine herpesvirus 4 (strain 1942) (EHV-4).